We begin with the raw amino-acid sequence, 130 residues long: Small ribosomal subunit protein uS8 (130 aa).

This sequence belongs to the universal ribosomal protein uS8 family.

This chain is Small ribosomal subunit protein uS8 (RPS15A), found in Strongylocentrotus purpuratus (Purple sea urchin).